Reading from the N-terminus, the 806-residue chain is SH3-containing GRB2-like protein 3-interacting protein 1 (806 aa).

Disordered stretches follow at residues 1 to 115 (MMEG…ESHK) and 142 to 278 (SIGN…QAAT). Basic and acidic residues-rich tracts occupy residues 16 to 32 (RKKEKDTDSTGSPDRDG) and 40 to 54 (PPYHSKAECAREGGK). Phosphoserine occurs at positions 78, 104, 105, 107, 149, 151, 156, and 169. A phosphothreonine mark is found at threonine 180 and threonine 182. Phosphoserine is present on residues serine 236 and phenylalanine 243. Positions 245–260 (TGTPPPLPPKTVPATP) are enriched in pro residues. A phosphothreonine mark is found at threonine 247 and threonine 259. Serine 265, aspartate 274, serine 287, serine 289, serine 300, serine 316, and serine 319 each carry phosphoserine. The segment covering 265-276 (SPLTVATGNDQA) has biased composition (polar residues). Basic and acidic residues predominate over residues 315–324 (FSDASPEHVT). The tract at residues 315-533 (FSDASPEHVT…SRGPSPLTMG (219 aa)) is disordered. Phosphothreonine occurs at positions 324, 328, and 335. Low complexity predominate over residues 335–345 (TPPAASDIPAD). Residue alanine 338 is modified to Phosphoserine. The span at 346–369 (SPAPAPPGPTGSAGPPGPPGPRHV) shows a compositional bias: pro residues. A Phosphoserine modification is found at serine 371. A compositionally biased stretch (basic and acidic residues) spans 377-392 (EVQKKVAEQTFIKDDY). At serine 398 the chain carries Phosphoserine. Threonine 409 carries the post-translational modification Phosphothreonine. The segment covering 436–453 (TSGASSPARPATPLVPCS) has biased composition (low complexity). A compositionally biased stretch (pro residues) spans 454–473 (TTPPPPPPRPPSRPKLPPGK). 2 stretches are compositionally biased toward low complexity: residues 480-490 (SRPFSPPIHSS) and 497-520 (PLARAESTSSISSTNSLSAATTPT). Phosphoserine is present on residues serine 484, serine 505, and glycine 533. Positions 537–805 (TLPVAAAFTE…RFAAGKYLAD (269 aa)) constitute an MHD domain. Interaction with DPF motifs-containing proteins regions lie at residues 539–545 (PVAAAFT), 571–573 (SFP), 645–648 (TYYN), and 791–796 (SLIKKR). Positions 627-806 (MPNLMTHLKK…FAAGKYLADN (180 aa)) are necessary and sufficient to mediate interaction with CANX.

In terms of assembly, interacts with proteins essential or regulating the formation of functional clathrin-coated pits. Interacts with CANX. Interacts with AP2A1. Interacts with EPS15. Interacts with SH3GL3. Interacts with AMPH. Interacts with ITSN1 (via SH3 domains). Interacts with and REPS1. Detected in brain, spinal cord and cerebellum.

It localises to the membrane. The protein resides in the clathrin-coated pit. Functionally, may function in clathrin-mediated endocytosis. Has both a membrane binding/tubulating activity and the ability to recruit proteins essential to the formation of functional clathrin-coated pits. Has a preference for membranes enriched in phosphatidylserine and phosphoinositides and is required for the endocytosis of the transferrin receptor. May also bind tubulin. May play a role in the regulation of energy homeostasis. In Mus musculus (Mouse), this protein is SH3-containing GRB2-like protein 3-interacting protein 1 (Sgip1).